The sequence spans 373 residues: Dual-specificity RNA methyltransferase RlmN (373 aa).

Glu-94 serves as the catalytic Proton acceptor. In terms of domain architecture, Radical SAM core spans 100 to 339 (EDDRATLCVS…VIVRKTRGDD (240 aa)). The cysteines at positions 107 and 344 are disulfide-linked. [4Fe-4S] cluster is bound by residues Cys-114, Cys-118, and Cys-121. S-adenosyl-L-methionine contacts are provided by residues 168-169 (GE), Ser-200, 222-224 (SIH), and Asn-301. The active-site S-methylcysteine intermediate is the Cys-344.

This sequence belongs to the radical SAM superfamily. RlmN family. The cofactor is [4Fe-4S] cluster.

It is found in the cytoplasm. It carries out the reaction adenosine(2503) in 23S rRNA + 2 reduced [2Fe-2S]-[ferredoxin] + 2 S-adenosyl-L-methionine = 2-methyladenosine(2503) in 23S rRNA + 5'-deoxyadenosine + L-methionine + 2 oxidized [2Fe-2S]-[ferredoxin] + S-adenosyl-L-homocysteine. The enzyme catalyses adenosine(37) in tRNA + 2 reduced [2Fe-2S]-[ferredoxin] + 2 S-adenosyl-L-methionine = 2-methyladenosine(37) in tRNA + 5'-deoxyadenosine + L-methionine + 2 oxidized [2Fe-2S]-[ferredoxin] + S-adenosyl-L-homocysteine. In terms of biological role, specifically methylates position 2 of adenine 2503 in 23S rRNA and position 2 of adenine 37 in tRNAs. m2A2503 modification seems to play a crucial role in the proofreading step occurring at the peptidyl transferase center and thus would serve to optimize ribosomal fidelity. The sequence is that of Dual-specificity RNA methyltransferase RlmN from Shewanella amazonensis (strain ATCC BAA-1098 / SB2B).